We begin with the raw amino-acid sequence, 468 residues long: 3-isopropylmalate dehydratase large subunit (468 aa).

[4Fe-4S] cluster-binding residues include Cys-349, Cys-409, and Cys-412.

It belongs to the aconitase/IPM isomerase family. LeuC type 1 subfamily. As to quaternary structure, heterodimer of LeuC and LeuD. It depends on [4Fe-4S] cluster as a cofactor.

It carries out the reaction (2R,3S)-3-isopropylmalate = (2S)-2-isopropylmalate. It functions in the pathway amino-acid biosynthesis; L-leucine biosynthesis; L-leucine from 3-methyl-2-oxobutanoate: step 2/4. Functionally, catalyzes the isomerization between 2-isopropylmalate and 3-isopropylmalate, via the formation of 2-isopropylmaleate. This is 3-isopropylmalate dehydratase large subunit from Shewanella baltica (strain OS155 / ATCC BAA-1091).